The following is a 233-amino-acid chain: MTSTNIDNRVPIEKTIEVIVKNDKGEEVKVIKRYQEYQITVKRNRKVDERKKWKKFGECDNKTGLENTAYGDEQFLVLTRGAEVKEEEKDVVKCRICKKNHFTTKCPYKDALELTTQPQKSEKEEKPISNKYIAPNLRGGYTGSAPSGSDVPSIMVSNLSQNATEKDLYELFGQFGPVSRVSIPKSMEGSSKGFAYVTYNHLDSAEKALKQLNGHRYDYLVLSLEFAKKKSLN.

Positions 152–229 constitute an RRM domain; the sequence is PSIMVSNLSQ…LVLSLEFAKK (78 aa).

Belongs to the eIF-3 subunit G family. As to quaternary structure, component of the eukaryotic translation initiation factor 3 (eIF-3) complex.

Its subcellular location is the cytoplasm. RNA-binding component of the eukaryotic translation initiation factor 3 (eIF-3) complex, which is involved in protein synthesis of a specialized repertoire of mRNAs and, together with other initiation factors, stimulates binding of mRNA and methionyl-tRNAi to the 40S ribosome. The eIF-3 complex specifically targets and initiates translation of a subset of mRNAs involved in cell proliferation. This subunit can bind 18S rRNA. The sequence is that of Eukaryotic translation initiation factor 3 subunit G (eif3G) from Dictyostelium discoideum (Social amoeba).